A 210-amino-acid chain; its full sequence is Thiamine-phosphate synthase (210 aa).

4-amino-2-methyl-5-(diphosphooxymethyl)pyrimidine contacts are provided by residues 39–43 (QLREK) and Asn71. 2 residues coordinate Mg(2+): Asp72 and Asp91. A 4-amino-2-methyl-5-(diphosphooxymethyl)pyrimidine-binding site is contributed by Ser110. 136–138 (TST) serves as a coordination point for 2-[(2R,5Z)-2-carboxy-4-methylthiazol-5(2H)-ylidene]ethyl phosphate. Lys139 contributes to the 4-amino-2-methyl-5-(diphosphooxymethyl)pyrimidine binding site. 2-[(2R,5Z)-2-carboxy-4-methylthiazol-5(2H)-ylidene]ethyl phosphate contacts are provided by residues Gly166 and 186–187 (VS).

Belongs to the thiamine-phosphate synthase family. Mg(2+) serves as cofactor.

It catalyses the reaction 2-[(2R,5Z)-2-carboxy-4-methylthiazol-5(2H)-ylidene]ethyl phosphate + 4-amino-2-methyl-5-(diphosphooxymethyl)pyrimidine + 2 H(+) = thiamine phosphate + CO2 + diphosphate. The enzyme catalyses 2-(2-carboxy-4-methylthiazol-5-yl)ethyl phosphate + 4-amino-2-methyl-5-(diphosphooxymethyl)pyrimidine + 2 H(+) = thiamine phosphate + CO2 + diphosphate. The catalysed reaction is 4-methyl-5-(2-phosphooxyethyl)-thiazole + 4-amino-2-methyl-5-(diphosphooxymethyl)pyrimidine + H(+) = thiamine phosphate + diphosphate. Its pathway is cofactor biosynthesis; thiamine diphosphate biosynthesis; thiamine phosphate from 4-amino-2-methyl-5-diphosphomethylpyrimidine and 4-methyl-5-(2-phosphoethyl)-thiazole: step 1/1. Functionally, condenses 4-methyl-5-(beta-hydroxyethyl)thiazole monophosphate (THZ-P) and 2-methyl-4-amino-5-hydroxymethyl pyrimidine pyrophosphate (HMP-PP) to form thiamine monophosphate (TMP). This chain is Thiamine-phosphate synthase, found in Ruminiclostridium cellulolyticum (strain ATCC 35319 / DSM 5812 / JCM 6584 / H10) (Clostridium cellulolyticum).